A 173-amino-acid polypeptide reads, in one-letter code: Crossover junction endodeoxyribonuclease RuvC (173 aa).

Active-site residues include Asp-10, Glu-71, and Asp-143. Mg(2+) contacts are provided by Asp-10, Glu-71, and Asp-143.

The protein belongs to the RuvC family. As to quaternary structure, homodimer which binds Holliday junction (HJ) DNA. The HJ becomes 2-fold symmetrical on binding to RuvC with unstacked arms; it has a different conformation from HJ DNA in complex with RuvA. In the full resolvosome a probable DNA-RuvA(4)-RuvB(12)-RuvC(2) complex forms which resolves the HJ. The cofactor is Mg(2+).

The protein resides in the cytoplasm. It catalyses the reaction Endonucleolytic cleavage at a junction such as a reciprocal single-stranded crossover between two homologous DNA duplexes (Holliday junction).. Its function is as follows. The RuvA-RuvB-RuvC complex processes Holliday junction (HJ) DNA during genetic recombination and DNA repair. Endonuclease that resolves HJ intermediates. Cleaves cruciform DNA by making single-stranded nicks across the HJ at symmetrical positions within the homologous arms, yielding a 5'-phosphate and a 3'-hydroxyl group; requires a central core of homology in the junction. The consensus cleavage sequence is 5'-(A/T)TT(C/G)-3'. Cleavage occurs on the 3'-side of the TT dinucleotide at the point of strand exchange. HJ branch migration catalyzed by RuvA-RuvB allows RuvC to scan DNA until it finds its consensus sequence, where it cleaves and resolves the cruciform DNA. This is Crossover junction endodeoxyribonuclease RuvC from Gloeobacter violaceus (strain ATCC 29082 / PCC 7421).